A 606-amino-acid polypeptide reads, in one-letter code: Phosphomethylpyrimidine synthase (606 aa).

The segment covering 1-13 (MTTADARTPASKQ) has biased composition (polar residues). 2 disordered regions span residues 1-49 (MTTA…SRPD) and 105-147 (AGRP…DGRP). A compositionally biased stretch (low complexity) spans 14-31 (NDGTPDGTTPDAGTPNDG). The segment covering 105–117 (AGRPVRPEDDGLK) has biased composition (basic and acidic residues). Residues asparagine 213, methionine 242, tyrosine 271, histidine 307, 327–329 (SRG), 368–371 (DGLR), and glutamate 407 each bind substrate. Position 411 (histidine 411) interacts with Zn(2+). Tyrosine 434 provides a ligand contact to substrate. Histidine 475 contributes to the Zn(2+) binding site. 3 residues coordinate [4Fe-4S] cluster: cysteine 555, cysteine 558, and cysteine 563.

This sequence belongs to the ThiC family. Requires [4Fe-4S] cluster as cofactor.

The catalysed reaction is 5-amino-1-(5-phospho-beta-D-ribosyl)imidazole + S-adenosyl-L-methionine = 4-amino-2-methyl-5-(phosphooxymethyl)pyrimidine + CO + 5'-deoxyadenosine + formate + L-methionine + 3 H(+). Its pathway is cofactor biosynthesis; thiamine diphosphate biosynthesis. Catalyzes the synthesis of the hydroxymethylpyrimidine phosphate (HMP-P) moiety of thiamine from aminoimidazole ribotide (AIR) in a radical S-adenosyl-L-methionine (SAM)-dependent reaction. This is Phosphomethylpyrimidine synthase from Streptomyces griseus subsp. griseus (strain JCM 4626 / CBS 651.72 / NBRC 13350 / KCC S-0626 / ISP 5235).